Consider the following 396-residue polypeptide: Tryptophan synthase beta chain (396 aa).

At K86 the chain carries N6-(pyridoxal phosphate)lysine.

Belongs to the TrpB family. Tetramer of two alpha and two beta chains. It depends on pyridoxal 5'-phosphate as a cofactor.

The catalysed reaction is (1S,2R)-1-C-(indol-3-yl)glycerol 3-phosphate + L-serine = D-glyceraldehyde 3-phosphate + L-tryptophan + H2O. It participates in amino-acid biosynthesis; L-tryptophan biosynthesis; L-tryptophan from chorismate: step 5/5. In terms of biological role, the beta subunit is responsible for the synthesis of L-tryptophan from indole and L-serine. The protein is Tryptophan synthase beta chain of Vibrio atlanticus (strain LGP32) (Vibrio splendidus (strain Mel32)).